Here is a 67-residue protein sequence, read N- to C-terminus: 2S seed storage albumin protein (67 aa).

Belongs to the 2S seed storage albumins family. As to quaternary structure, heterodimer of a small and a large chain linked by disulfide bonds.

Its subcellular location is the vacuole. The protein resides in the aleurone grain. Functionally, this is a 2S seed storage protein. In Matteuccia struthiopteris (European ostrich fern), this protein is 2S seed storage albumin protein.